The chain runs to 651 residues: Chaperone protein dnaK1 (651 aa).

Threonine 197 carries the post-translational modification Phosphothreonine; by autocatalysis.

It belongs to the heat shock protein 70 family.

In terms of biological role, acts as a chaperone. The protein is Chaperone protein dnaK1 (dnaK1) of Thermosynechococcus vestitus (strain NIES-2133 / IAM M-273 / BP-1).